We begin with the raw amino-acid sequence, 65 residues long: Large ribosomal subunit protein uL30 (65 aa).

It belongs to the universal ribosomal protein uL30 family. Part of the 50S ribosomal subunit.

This chain is Large ribosomal subunit protein uL30, found in Mycobacterium bovis (strain ATCC BAA-935 / AF2122/97).